Consider the following 47-residue polypeptide: Sperm protamine P1 (47 aa).

This sequence belongs to the protamine P1 family. As to expression, testis.

The protein localises to the nucleus. The protein resides in the chromosome. Its function is as follows. Protamines substitute for histones in the chromatin of sperm during the haploid phase of spermatogenesis. They compact sperm DNA into a highly condensed, stable and inactive complex. The sequence is that of Sperm protamine P1 (PRM1) from Myotis daubentonii (Daubenton's bat).